A 486-amino-acid polypeptide reads, in one-letter code: Malonate-semialdehyde dehydrogenase (486 aa).

F154, K178, E181, R182, and S231 together coordinate NAD(+). C286 acts as the Nucleophile in catalysis. An NAD(+)-binding site is contributed by E386.

This sequence belongs to the aldehyde dehydrogenase family. IolA subfamily. As to quaternary structure, homotetramer.

It catalyses the reaction 3-oxopropanoate + NAD(+) + CoA + H2O = hydrogencarbonate + acetyl-CoA + NADH + H(+). It carries out the reaction 2-methyl-3-oxopropanoate + NAD(+) + CoA + H2O = propanoyl-CoA + hydrogencarbonate + NADH + H(+). It functions in the pathway polyol metabolism; myo-inositol degradation into acetyl-CoA; acetyl-CoA from myo-inositol: step 7/7. Its function is as follows. Catalyzes the oxidation of malonate semialdehyde (MSA) and methylmalonate semialdehyde (MMSA) into acetyl-CoA and propanoyl-CoA, respectively. Is involved in a myo-inositol catabolic pathway. Bicarbonate, and not CO2, is the end-product of the enzymatic reaction. The protein is Malonate-semialdehyde dehydrogenase of Bacillus cereus (strain G9842).